We begin with the raw amino-acid sequence, 365 residues long: Pre-mRNA-splicing factor srp2 (365 aa).

2 consecutive RRM domains span residues 6–69 and 100–166; these read LFVG…RIVV and LIVE…AVTL. The disordered stretch occupies residues 166–365; sequence LREDPDAANE…SAEGQVAAEW (200 aa). Residues 184 to 194 are compositionally biased toward basic residues; it reads FRSRSPPARRR. 7 positions are modified to phosphoserine: serine 186, serine 188, serine 276, serine 294, serine 296, serine 298, and serine 308. Over residues 195-307 the composition is skewed to basic and acidic residues; the sequence is YRDDYRRGGD…SPRRDREENR (113 aa). A compositionally biased stretch (low complexity) spans 316–332; that stretch reads SYSAAPEASMESSAPTE. Residues 341–353 are compositionally biased toward polar residues; sequence EEQQPLQNHSDVG.

This sequence belongs to the splicing factor SR family. In terms of processing, extensively phosphorylated on serine residues in the RS domain.

The protein resides in the nucleus. Functionally, has a role in pre-mRNA splicing where it is involved in spliceosome assembly. This Schizosaccharomyces pombe (strain 972 / ATCC 24843) (Fission yeast) protein is Pre-mRNA-splicing factor srp2 (srp2).